Here is a 360-residue protein sequence, read N- to C-terminus: Alpha-methylacyl-CoA racemase (360 aa).

Residues Arg-38, 59–62 (ADLK), 83–85 (GYR), Arg-91, and 125–130 (GHDINY) contribute to the substrate site. Catalysis depends on His-126, which acts as the Proton acceptor. Asp-156 serves as the catalytic Proton donor.

It belongs to the CoA-transferase III family. In terms of assembly, homodimer.

The enzyme catalyses a (2S)-2-methylacyl-CoA = a (2R)-2-methylacyl-CoA. It catalyses the reaction (2S)-2-methyltetradecanoyl-CoA = (2R)-2-methyltetradecanoyl-CoA. It carries out the reaction (2R)-pristanoyl-CoA = (2S)-pristanoyl-CoA. The catalysed reaction is (25S)-3-oxocholest-4-en-26-oyl-CoA = (25R)-3-oxocholest-4-en-26-oyl-CoA. The enzyme catalyses (2S)-ibuprofenoyl-CoA = (2R)-ibuprofenoyl-CoA. With respect to regulation, inactivated by N,N-dialkylcarbamoyl-CoA substrate-product analogs. In terms of biological role, catalyzes the epimerization of (2R)- and (2S)-methylacyl-coenzyme A (CoA) thioesters. Accepts as substrates a wide range of alpha-methylacyl-CoAs, including (2R)-2-methylmyristoyl-CoA and (2S)-2-methylmyristoyl-CoA, (2R)-pristanoyl-CoA and (2S)-pristanoyl-CoA, and the cholesterol esters (25R)-3-oxo-cholest-4-en-26-oyl-CoA and (25S)-3-oxo-cholest-4-en-26-oyl-CoA. Can also catalyze the interconversion of the non-physiologic substrates (2R)-ibuprofenoyl-CoA and (2S)-ibuprofenoyl-CoA, which are potential competitive inhibitors of the enzyme. The chain is Alpha-methylacyl-CoA racemase from Mycobacterium tuberculosis (strain ATCC 25618 / H37Rv).